A 265-amino-acid chain; its full sequence is 5'-nucleotidase SurE (265 aa).

4 residues coordinate a divalent metal cation: D8, D9, S39, and N96.

It belongs to the SurE nucleotidase family. The cofactor is a divalent metal cation.

It localises to the cytoplasm. It catalyses the reaction a ribonucleoside 5'-phosphate + H2O = a ribonucleoside + phosphate. Its function is as follows. Nucleotidase that shows phosphatase activity on nucleoside 5'-monophosphates. This chain is 5'-nucleotidase SurE, found in Dehalococcoides mccartyi (strain CBDB1).